The primary structure comprises 180 residues: Peptide deformylase (180 aa).

Residues Cys-88 and His-130 each coordinate Fe cation. The active site involves Glu-131. His-134 contributes to the Fe cation binding site.

This sequence belongs to the polypeptide deformylase family. Requires Fe(2+) as cofactor.

The catalysed reaction is N-terminal N-formyl-L-methionyl-[peptide] + H2O = N-terminal L-methionyl-[peptide] + formate. Removes the formyl group from the N-terminal Met of newly synthesized proteins. Requires at least a dipeptide for an efficient rate of reaction. N-terminal L-methionine is a prerequisite for activity but the enzyme has broad specificity at other positions. This Acidothermus cellulolyticus (strain ATCC 43068 / DSM 8971 / 11B) protein is Peptide deformylase.